Reading from the N-terminus, the 333-residue chain is MTRILDNDLIGDEGSVERTLRPQYLREYIGQDRVKDQLMIFIEAAKRREESLDHVLLFGPPGLGKTTMAFVIANELGVHLKQTSGPAIEKAGDLVAILNDLEPGDVLFIDEIHRMPMTVEEILYSAMEDFYIDIMIGAGDTSRSVHLELPPFTLIGATTRAGMLSNPLRARFGITGHMEYYQTADLTEIVERTADIFDMTIKHEAAYELARRSRGTPRIANRLLKRVRDYAQIMGDGMITTQITDKALTMLDVDQEGLDYVDQKILRTMIEVYQGGPVGLGTLSVNIAEERDTVEDMYEPYLIQKGFIMRTRTGRVVTEKAYQHLGYPYEKKH.

The interval 1-181 (MTRILDNDLI…FGITGHMEYY (181 aa)) is large ATPase domain (RuvB-L). Residues leucine 20, arginine 21, glycine 62, lysine 65, threonine 66, threonine 67, 128–130 (EDF), arginine 171, tyrosine 181, and arginine 218 each bind ATP. Threonine 66 lines the Mg(2+) pocket. The segment at 182 to 252 (QTADLTEIVE…ITDKALTMLD (71 aa)) is small ATPAse domain (RuvB-S). The head domain (RuvB-H) stretch occupies residues 255-333 (QEGLDYVDQK…HLGYPYEKKH (79 aa)). Arginine 291, arginine 310, arginine 312, and arginine 315 together coordinate DNA.

This sequence belongs to the RuvB family. As to quaternary structure, homohexamer. Forms an RuvA(8)-RuvB(12)-Holliday junction (HJ) complex. HJ DNA is sandwiched between 2 RuvA tetramers; dsDNA enters through RuvA and exits via RuvB. An RuvB hexamer assembles on each DNA strand where it exits the tetramer. Each RuvB hexamer is contacted by two RuvA subunits (via domain III) on 2 adjacent RuvB subunits; this complex drives branch migration. In the full resolvosome a probable DNA-RuvA(4)-RuvB(12)-RuvC(2) complex forms which resolves the HJ.

The protein localises to the cytoplasm. It carries out the reaction ATP + H2O = ADP + phosphate + H(+). Its function is as follows. The RuvA-RuvB-RuvC complex processes Holliday junction (HJ) DNA during genetic recombination and DNA repair, while the RuvA-RuvB complex plays an important role in the rescue of blocked DNA replication forks via replication fork reversal (RFR). RuvA specifically binds to HJ cruciform DNA, conferring on it an open structure. The RuvB hexamer acts as an ATP-dependent pump, pulling dsDNA into and through the RuvAB complex. RuvB forms 2 homohexamers on either side of HJ DNA bound by 1 or 2 RuvA tetramers; 4 subunits per hexamer contact DNA at a time. Coordinated motions by a converter formed by DNA-disengaged RuvB subunits stimulates ATP hydrolysis and nucleotide exchange. Immobilization of the converter enables RuvB to convert the ATP-contained energy into a lever motion, pulling 2 nucleotides of DNA out of the RuvA tetramer per ATP hydrolyzed, thus driving DNA branch migration. The RuvB motors rotate together with the DNA substrate, which together with the progressing nucleotide cycle form the mechanistic basis for DNA recombination by continuous HJ branch migration. Branch migration allows RuvC to scan DNA until it finds its consensus sequence, where it cleaves and resolves cruciform DNA. This Streptococcus equi subsp. zooepidemicus (strain MGCS10565) protein is Holliday junction branch migration complex subunit RuvB.